The sequence spans 201 residues: MSKVLVLKSSILATSSQSNQLADFFVEQWQAAHAGDQITVRDLAAQPIPVLDGELVGALRPSGTALTPRQQEALALSDELIAELQANDVIVIAAPMYNFNIPTQLKNYFDMIARAGVTFRYTEKGPEGLVTGKRAIILTSRGGIHKDTPTDLVVPYLRLFLGFIGITDVEFVFAEGIAYGPEVATKAQADAKTLLAQVVAA.

FMN contacts are provided by residues Ser10, 16 to 18 (SQS), 96 to 99 (MYNF), and 140 to 143 (SRGG).

It belongs to the azoreductase type 1 family. In terms of assembly, homodimer. FMN is required as a cofactor.

The enzyme catalyses 2 a quinone + NADH + H(+) = 2 a 1,4-benzosemiquinone + NAD(+). It catalyses the reaction N,N-dimethyl-1,4-phenylenediamine + anthranilate + 2 NAD(+) = 2-(4-dimethylaminophenyl)diazenylbenzoate + 2 NADH + 2 H(+). Quinone reductase that provides resistance to thiol-specific stress caused by electrophilic quinones. Functionally, also exhibits azoreductase activity. Catalyzes the reductive cleavage of the azo bond in aromatic azo compounds to the corresponding amines. The polypeptide is FMN-dependent NADH:quinone oxidoreductase (Yersinia pseudotuberculosis serotype O:1b (strain IP 31758)).